A 368-amino-acid chain; its full sequence is MKIETKIAKFTKPLYLESGRILEPWQIIYETYGELNEKKDNVILITHALSGSHHAAGMYEGDRKPGWWDGLIGDGKAIDTTKYFVISTNVIGSCFGSTSPMSPIHPGSSERYRLKFPVVTIKDMVKAQKILLDSLGIRHLKAIVGGSMGGMQALRFAVDFPGFCENIIPIATTYQTKPYVIAINKSMIEAIRADSEFKNGNYDPDIIKQNGLKGLAAARMIGYLNYISPKTFERKFGREYVKTDGMFELFGRFQVESYLEYNGAMFPKWFDPLSYIYILKAISLFDISRGFVSLEDAFSQIKDKLHLISFSGDTLFFPEEMRDIKNYMDKVGGKCNYFEINSDYGHDSFLVELEKFDFIISDILKGEV.

One can recognise an AB hydrolase-1 domain in the interval 41–352 (NVILITHALS…DYGHDSFLVE (312 aa)). Residue serine 147 is the Nucleophile of the active site. Residue arginine 219 coordinates substrate. Residues aspartate 313 and histidine 346 contribute to the active site. Aspartate 347 contacts substrate.

It belongs to the AB hydrolase superfamily. MetX family. Homodimer.

Its subcellular location is the cytoplasm. The catalysed reaction is L-homoserine + acetyl-CoA = O-acetyl-L-homoserine + CoA. Its pathway is amino-acid biosynthesis; L-methionine biosynthesis via de novo pathway; O-acetyl-L-homoserine from L-homoserine: step 1/1. Transfers an acetyl group from acetyl-CoA to L-homoserine, forming acetyl-L-homoserine. This is Homoserine O-acetyltransferase from Nautilia profundicola (strain ATCC BAA-1463 / DSM 18972 / AmH).